The primary structure comprises 479 residues: MFS-type transporter lnaF (479 aa).

Transmembrane regions (helical) follow at residues 47–67 (WIYL…GFTP), 71–91 (GLII…SGAI), 104–124 (LLCI…GPLI), 136–156 (WCFY…VFLL), 177–197 (LVGL…LSWG), 208–228 (IIGL…VQWW), 250–270 (IFSF…PIWF), 283–303 (LMSI…AVLV), 306–326 (IGFY…GAGL), 344–364 (IPFG…VQAV), and 372–392 (LAIA…ISVA). The N-linked (GlcNAc...) asparagine glycan is linked to Asn416. The helical transmembrane segment at 442 to 462 (LAITQALYVGVALSSLAIVGA) threads the bilayer.

It belongs to the major facilitator superfamily. TCR/Tet family.

It is found in the cell membrane. In terms of biological role, MFS-type transporter; part of the lnb gene cluster that mediates the biosynthesis of diastereomeric piperazines. Lna and lnb clusters encode sets of enzymes that produce overlapping sets of previously undescribed metabolites such as piperazinomycin-like metabolites or morpholine. The lna and lnb biosynthetic pathways appear to be part of a signaling network that controls the formation of sclerotia, a resilient overwintering structure. May be involved in the secretion of the metabolites produced by the lna and lnb clusters. In Aspergillus flavus (strain ATCC 200026 / FGSC A1120 / IAM 13836 / NRRL 3357 / JCM 12722 / SRRC 167), this protein is MFS-type transporter lnaF.